We begin with the raw amino-acid sequence, 349 residues long: Core protein VP7 (349 aa).

2 N-linked (GlcNAc...) asparagine; by host glycosylation sites follow: Asn-148 and Asn-287.

The protein belongs to the orbivirus VP7 family.

It is found in the virion. Its function is as follows. The VP7 protein is one of the five proteins (with VP1, VP3, VP4, and VP6) which form the inner capsid of the virus. This Epizootic hemorrhagic disease virus 1 (EHDV-1) protein is Core protein VP7 (Segment-7).